The sequence spans 430 residues: Enolase (430 aa).

Gln-164 contributes to the (2R)-2-phosphoglycerate binding site. The Proton donor role is filled by Glu-206. Residues Asp-243, Glu-286, and Asp-313 each coordinate Mg(2+). Lys-338, Arg-367, Ser-368, and Lys-389 together coordinate (2R)-2-phosphoglycerate. Lys-338 serves as the catalytic Proton acceptor.

Belongs to the enolase family. As to quaternary structure, component of the RNA degradosome, a multiprotein complex involved in RNA processing and mRNA degradation. Requires Mg(2+) as cofactor.

Its subcellular location is the cytoplasm. It localises to the secreted. The protein localises to the cell surface. It catalyses the reaction (2R)-2-phosphoglycerate = phosphoenolpyruvate + H2O. The protein operates within carbohydrate degradation; glycolysis; pyruvate from D-glyceraldehyde 3-phosphate: step 4/5. Its function is as follows. Catalyzes the reversible conversion of 2-phosphoglycerate (2-PG) into phosphoenolpyruvate (PEP). It is essential for the degradation of carbohydrates via glycolysis. This Dichelobacter nodosus (strain VCS1703A) protein is Enolase.